The following is a 118-amino-acid chain: Small ribosomal subunit protein uS13 (118 aa).

Positions 92 to 118 are disordered; it reads RRSLPVRGQRTKTNARTRKGPRKPIKK.

This sequence belongs to the universal ribosomal protein uS13 family. In terms of assembly, part of the 30S ribosomal subunit. Forms a loose heterodimer with protein S19. Forms two bridges to the 50S subunit in the 70S ribosome.

Located at the top of the head of the 30S subunit, it contacts several helices of the 16S rRNA. In the 70S ribosome it contacts the 23S rRNA (bridge B1a) and protein L5 of the 50S subunit (bridge B1b), connecting the 2 subunits; these bridges are implicated in subunit movement. Contacts the tRNAs in the A and P-sites. In Acinetobacter baumannii (strain AB307-0294), this protein is Small ribosomal subunit protein uS13.